Consider the following 301-residue polypeptide: tRNA pseudouridine synthase B (301 aa).

Residue aspartate 38 is the Nucleophile of the active site.

The protein belongs to the pseudouridine synthase TruB family. Type 1 subfamily.

The catalysed reaction is uridine(55) in tRNA = pseudouridine(55) in tRNA. Its function is as follows. Responsible for synthesis of pseudouridine from uracil-55 in the psi GC loop of transfer RNAs. The sequence is that of tRNA pseudouridine synthase B from Lacticaseibacillus paracasei (strain ATCC 334 / BCRC 17002 / CCUG 31169 / CIP 107868 / KCTC 3260 / NRRL B-441) (Lactobacillus paracasei).